Consider the following 324-residue polypeptide: Phthalate 4,5-dioxygenase oxygenase reductase subunit (324 aa).

Positions 9–111 (DGFTGLKVIA…ATPQNEFELI (103 aa)) constitute an FAD-binding FR-type domain. Residue 115–229 (RQFIFVAGGI…PGSIHFESFG (115 aa)) coordinates NAD(+). The 84-residue stretch at 241-324 (FSVTLGRSGI…ARNDVLVLDL (84 aa)) folds into the 2Fe-2S ferredoxin-type domain. Residues C275, C280, C283, and C311 each contribute to the [2Fe-2S] cluster site.

Belongs to the PDR/VanB family. This dioxygenase system consists of two proteins: phthalate oxygenase and phthalate oxygenase reductase. It depends on FMN as a cofactor.

The enzyme catalyses phthalate + NADH + O2 + H(+) = cis-4,5-dihydroxycyclohexa-2,6-diene-1,2-dicarboxylate + NAD(+). The protein operates within xenobiotic degradation; phthalate degradation; 3,4-dihydroxybenzoate from phthalate: step 1/3. The sequence is that of Phthalate 4,5-dioxygenase oxygenase reductase subunit (pht2) from Pseudomonas putida (Arthrobacter siderocapsulatus).